A 492-amino-acid polypeptide reads, in one-letter code: UPF0236 protein TTE0402 (492 aa).

The protein belongs to the UPF0236 family.

The sequence is that of UPF0236 protein TTE0402 from Caldanaerobacter subterraneus subsp. tengcongensis (strain DSM 15242 / JCM 11007 / NBRC 100824 / MB4) (Thermoanaerobacter tengcongensis).